The primary structure comprises 124 residues: Holo-[acyl-carrier-protein] synthase (124 aa).

Mg(2+)-binding residues include Asp8 and Glu55.

The protein belongs to the P-Pant transferase superfamily. AcpS family. It depends on Mg(2+) as a cofactor.

The protein localises to the cytoplasm. The enzyme catalyses apo-[ACP] + CoA = holo-[ACP] + adenosine 3',5'-bisphosphate + H(+). Its function is as follows. Transfers the 4'-phosphopantetheine moiety from coenzyme A to a Ser of acyl-carrier-protein. This Desulfovibrio desulfuricans (strain ATCC 27774 / DSM 6949 / MB) protein is Holo-[acyl-carrier-protein] synthase.